The chain runs to 528 residues: NAC domain-containing protein 13 (528 aa).

Residues 10 to 160 (LAPGFRFHPT…AYVLYKIYKK (151 aa)) enclose the NAC domain. Residues 107 to 166 (VGEKKTLVFHRGRAPNGERTNWVMHEYTLHKEELKRCGGEDVKDAYVLYKIYKKSGSGPK) mediate DNA binding. Positions 388–419 (EAPGTGDSSEFLNPVPSGISTTNEDDPSKDES) are disordered. A helical transmembrane segment spans residues 499 to 519 (FFCLSIIGALCALFWVIIGTM).

In terms of assembly, interacts with RCD1. Expressed in roots, rosette leaves, shoot apex, stems and flowers.

It localises to the endoplasmic reticulum membrane. Its subcellular location is the nucleus. Its function is as follows. Transcriptional activator activated by proteolytic cleavage through regulated intramembrane proteolysis (RIP). Involved in oxidative stress tolerance by mediating regulation of mitochondrial retrograde signaling during mitochondrial dysfunction. Interacts directly with the mitochondrial dysfunction DNA consensus motif 5'-CTTGNNNNNCA[AC]G-3', a cis-regulatory elements of several mitochondrial retrograde regulation-induced genes, and triggers increased oxidative stress tolerance. The protein is NAC domain-containing protein 13 of Arabidopsis thaliana (Mouse-ear cress).